The following is a 558-amino-acid chain: Ceramide kinase-like protein (558 aa).

The disordered stretch occupies residues 1–36; it reads MPWRRRRNRVSALEGGREEEAPPEAAAVPPALLTSP. 2 short sequence motifs (nuclear localization signal) span residues 2-9 and 102-106; these read PWRRRRNR and KLKRR. The region spanning 164 to 339 is the DAGKc domain; the sequence is NRPKSLKILL…VDVCTFSTAG (176 aa).

Phosphorylated on serine residues. In terms of tissue distribution, isoform 1 and isoform 2 are expressed in adult retina, liver and pancreas as well as in fetal brain, lung and kidney. Isoform 3 is expressed in adult retina as well as in fetal lung and liver. Isoform 4 is expressed in adult retina, lung and kidney as well as in fetal lung and liver. Moderately expressed in retina, kidney, lung, testis, trachea, and pancreas. Weakly expressed in brain, placenta and liver.

Its subcellular location is the cytoplasm. The protein localises to the nucleus. The protein resides in the nucleolus. It is found in the golgi apparatus. It localises to the trans-Golgi network. Its subcellular location is the endoplasmic reticulum. Has no detectable ceramide-kinase activity. Overexpression of CERKL protects cells from apoptosis in oxidative stress conditions. The chain is Ceramide kinase-like protein (CERKL) from Homo sapiens (Human).